Consider the following 699-residue polypeptide: Extracellular matrix protein 2 (699 aa).

The signal sequence occupies residues 1–20 (MKIAVLFCFFLLIIFQTDFG). The VWFC domain occupies 101–158 (GHCLVKGITMYNKAVWSPEPCTTCLCSDGRVLCDETMCHPQRCPQTVIPEGECCPVCS). Over residues 176-186 (EFSGDSSEQRE) the composition is skewed to basic and acidic residues. The disordered stretch occupies residues 176–316 (EFSGDSSEQR…PAPPRGTLRL (141 aa)). Residues 212–224 (QSEEDEEVKEEDT) are compositionally biased toward acidic residues. The segment covering 243–260 (GDSRGGDRKQRPGEERRL) has biased composition (basic and acidic residues). Residues 270-291 (EEEEDEEEEGEEGEEDEEDEED) are compositionally biased toward acidic residues. The short motif at 294 to 296 (RGD) is the Cell attachment site element. The 38-residue stretch at 307-344 (PAPPRGTLRLPSGCSLSYRTISCINAMLTQIPPLTAPQ) folds into the LRRNT domain. LRR repeat units lie at residues 368-388 (NLERLDLSKNNITSSGIGPKA), 394-415 (KLMRLNMDGNNLIQIPSQLPST), 416-436 (LEELKVNENNLQAIDEESLSD), 439-459 (QLVTLELEGNNLSEANVNPLA), 465-484 (SLAYLRLGKNKFRIIPQGLP), 486-507 (SIEELYLENNQIEEITEICFNH), 510-530 (KINVIVLRYNKIEENRIAPLA), 536-557 (NLESIDLSYNKLYHVPSYLPKS), 558-578 (LLHLVLLGNQIERIPGYVFGH), 582-602 (GLEYLYLSFNKLADDGMDRVS), 609-630 (SLRELFLDHNDLKSIPPGIQEM), 632-653 (ALHFLRLNNNKIRNILPEEICN), and 661-684 (NLEHLHLENNYIKIREIPSYTFSC). Asn378 is a glycosylation site (N-linked (GlcNAc...) asparagine). Asn449 is a glycosylation site (N-linked (GlcNAc...) asparagine). Residue Asn506 is glycosylated (N-linked (GlcNAc...) asparagine).

The protein belongs to the small leucine-rich proteoglycan (SLRP) family. SLRP class I subfamily. In terms of assembly, interacts with numerous extracellular matrix proteins. Interacts with MSL1 and RASSF1. As to expression, expressed predominantly in adipose tissue as well as female-specific organs such as mammary gland, ovary, and uterus.

The protein localises to the secreted. It localises to the extracellular space. Its subcellular location is the extracellular matrix. Promotes matrix assembly and cell adhesiveness. This is Extracellular matrix protein 2 (ECM2) from Homo sapiens (Human).